A 359-amino-acid chain; its full sequence is MSFTAPSDPVNKPTKVKVSQLCELCHSRKALIRRPKNLSKLCKQCFCLVFETEIHNTIVANNLFQRGEKVAVGASGGKDSTVLAHMLKLLNDRYDYGIEIVLLSIDEGIIGYRDDSLATVKRNQQQYGLPLEIFSFKDLYDWTMDEIVSVAGIRNSCTYCGVFRRQSLDRGAAKLGISHVVTGHNADDMAETVLMNILRGDVARLEKSTAIITQSSGSPIKRSKPFKYSYQKEIVLYAHYMKLDYFSTECTYAPEAFRGTAREYMKNLEAVRPSCIIDIIQSGENLALKAKKSNAGKRVVKFVDGNRCARCGYLSSNNICKACMLLEGLEKSRAQVAIENDTSADGAALKLRALEKLSF.

This sequence belongs to the TtcA family. CTU1/NCS6/ATPBD3 subfamily. As to quaternary structure, interacts with NCS2 and URM1. May act by forming a heterodimer with NCS2. Component of a large molecular weight complex of more than 250 kDa.

Its subcellular location is the cytoplasm. The protein localises to the mitochondrion. Its pathway is tRNA modification; 5-methoxycarbonylmethyl-2-thiouridine-tRNA biosynthesis. In terms of biological role, plays a central role in 2-thiolation of mcm(5)S(2)U at tRNA wobble positions of tRNA(Lys), tRNA(Glu) and tRNA(Gln). Directly binds tRNAs and probably acts by catalyzing adenylation of tRNAs, an intermediate required for 2-thiolation. It is unclear whether it acts as a sulfurtransferase that transfers sulfur from thiocarboxylated URM1 onto the uridine of tRNAs at wobble position. Prior mcm(5) tRNA modification by the elongator complex is required for 2-thiolation. May also be involved in protein urmylation. May also be involved in protein urmylation and in invasive and pseudohyphal growth. The sequence is that of Cytoplasmic tRNA 2-thiolation protein 1 from Saccharomyces cerevisiae (strain ATCC 204508 / S288c) (Baker's yeast).